A 119-amino-acid chain; its full sequence is Large ribosomal subunit protein bL20 (119 aa).

It belongs to the bacterial ribosomal protein bL20 family.

Binds directly to 23S ribosomal RNA and is necessary for the in vitro assembly process of the 50S ribosomal subunit. It is not involved in the protein synthesizing functions of that subunit. The sequence is that of Large ribosomal subunit protein bL20 from Thiobacillus denitrificans (strain ATCC 25259 / T1).